A 123-amino-acid chain; its full sequence is Holo-[acyl-carrier-protein] synthase (123 aa).

Mg(2+)-binding residues include Asp-8 and Glu-60.

The protein belongs to the P-Pant transferase superfamily. AcpS family. The cofactor is Mg(2+).

The protein localises to the cytoplasm. It catalyses the reaction apo-[ACP] + CoA = holo-[ACP] + adenosine 3',5'-bisphosphate + H(+). Its function is as follows. Transfers the 4'-phosphopantetheine moiety from coenzyme A to a Ser of acyl-carrier-protein. This Ehrlichia chaffeensis (strain ATCC CRL-10679 / Arkansas) protein is Holo-[acyl-carrier-protein] synthase.